Here is a 380-residue protein sequence, read N- to C-terminus: Cytochrome b (380 aa).

The next 4 membrane-spanning stretches (helical) occupy residues 34–54 (FGSL…LLAM), 78–99 (WLIR…YLHI), 114–134 (WNTG…GYVL), and 179–199 (FFAL…IHLT). Residues His84 and His98 each contribute to the heme b site. Heme b contacts are provided by His183 and His197. A ubiquinone is bound at residue His202. A run of 4 helical transmembrane segments spans residues 227–247 (LKDI…ALFS), 289–309 (LGGV…PFLH), 321–341 (LSQL…WVGS), and 348–368 (FIII…ILFP).

Belongs to the cytochrome b family. As to quaternary structure, the cytochrome bc1 complex contains 11 subunits: 3 respiratory subunits (MT-CYB, CYC1 and UQCRFS1), 2 core proteins (UQCRC1 and UQCRC2) and 6 low-molecular weight proteins (UQCRH/QCR6, UQCRB/QCR7, UQCRQ/QCR8, UQCR10/QCR9, UQCR11/QCR10 and a cleavage product of UQCRFS1). This cytochrome bc1 complex then forms a dimer. It depends on heme b as a cofactor.

Its subcellular location is the mitochondrion inner membrane. Functionally, component of the ubiquinol-cytochrome c reductase complex (complex III or cytochrome b-c1 complex) that is part of the mitochondrial respiratory chain. The b-c1 complex mediates electron transfer from ubiquinol to cytochrome c. Contributes to the generation of a proton gradient across the mitochondrial membrane that is then used for ATP synthesis. This Macronectes halli (Hall's giant petrel) protein is Cytochrome b (MT-CYB).